The sequence spans 382 residues: MDRFMWTNGLLEMNETLVIQQRGVRLYDGEDKAKLDVGGVVLSTHRLLWRDQKNHECCICIPLSQVIFFEEQAAGIGKSAKIVIHLHPAPENKEPGPYQHSKYSYIKLSFKEHGQIEFYRRLTEEMTQKRWENTPVSQPIPTGTGPKAGRTRAVGIVGIERKLEEKRKETDKNISEAFEDLSKLMEKAKEMVELSRSIANKIKDKQGDITEDETIRFKSYLLSMGIANPVTRETHGSGTQYHIQLAKQLGDMLQAPLEERGGMMALTEVYCLVNRARGMELLSPEDLVNACKIFESLKLPLRLRVFDSGVMVVQLQSHSEEEMIASALDNVSDKGSLTAEEFAKLLGLSVLLAKERLLLAEKMGHLCRDDSVEGLRFYPNLF.

A GLUE N-terminal domain is found at 1–88 (MDRFMWTNGL…SAKIVIHLHP (88 aa)). A GLUE C-terminal domain is found at 105 to 138 (YIKLSFKEHGQIEFYRRLTEEMTQKRWENTPVSQ). Residues 160–193 (ERKLEEKRKETDKNISEAFEDLSKLMEKAKEMVE) adopt a coiled-coil conformation.

Belongs to the VPS36 family. Component of the endosomal sorting complex required for transport II (ESCRT-II), composed of SNF8, VPS25 and VPS36.

Its subcellular location is the cytoplasm. The protein localises to the endosome. Functionally, component of the ESCRT-II complex (endosomal sorting complex required for transport II), which is required for multivesicular body (MVB) formation and sorting of endosomal cargo proteins into MVBs. The MVB pathway mediates delivery of transmembrane proteins into the lumen of the lysosome for degradation. The ESCRT-II complex is probably involved in the recruitment of the ESCRT-III complex. This chain is Vacuolar protein-sorting-associated protein 36 (vps36), found in Danio rerio (Zebrafish).